The primary structure comprises 124 residues: Large ribosomal subunit protein bL12 (124 aa).

It belongs to the bacterial ribosomal protein bL12 family. As to quaternary structure, homodimer. Part of the ribosomal stalk of the 50S ribosomal subunit. Forms a multimeric L10(L12)X complex, where L10 forms an elongated spine to which 2 to 4 L12 dimers bind in a sequential fashion. Binds GTP-bound translation factors.

In terms of biological role, forms part of the ribosomal stalk which helps the ribosome interact with GTP-bound translation factors. Is thus essential for accurate translation. This chain is Large ribosomal subunit protein bL12, found in Burkholderia ambifaria (strain MC40-6).